A 125-amino-acid chain; its full sequence is Large ribosomal subunit protein uL22 (125 aa).

It belongs to the universal ribosomal protein uL22 family. In terms of assembly, part of the 50S ribosomal subunit.

In terms of biological role, this protein binds specifically to 23S rRNA; its binding is stimulated by other ribosomal proteins, e.g. L4, L17, and L20. It is important during the early stages of 50S assembly. It makes multiple contacts with different domains of the 23S rRNA in the assembled 50S subunit and ribosome. The globular domain of the protein is located near the polypeptide exit tunnel on the outside of the subunit, while an extended beta-hairpin is found that lines the wall of the exit tunnel in the center of the 70S ribosome. The protein is Large ribosomal subunit protein uL22 of Thermobifida fusca (strain YX).